A 334-amino-acid polypeptide reads, in one-letter code: Galactosylgalactosylxylosylprotein 3-beta-glucuronosyltransferase 1 (334 aa).

Residues 1-6 (MPKRRD) lie on the Cytoplasmic side of the membrane. An essential for transport from endoplasmic reticulum to Golgi apparatus and interaction with SAR1A region spans residues 3–5 (KRR). The helical; Signal-anchor for type II membrane protein transmembrane segment at 7 to 27 (ILAIVLIVLPWTLLITVWHQS) threads the bilayer. The Lumenal segment spans residues 28-334 (TLAPLLAVHK…KGFTDPSVEI (307 aa)). The disordered stretch occupies residues 37–56 (KDEGSDPRRETPPGADPREY). UDP-alpha-D-glucuronate is bound at residue 91–93 (PTY). Phosphothreonine is present on residues threonine 103 and threonine 108. Aspartate 122 is a binding site for UDP-alpha-D-glucuronate. Residue asparagine 140 is glycosylated (N-linked (GlcNAc...) asparagine). UDP-alpha-D-glucuronate is bound by residues arginine 165 and arginine 170. Asparagine 184 is a glycosylation site (N-linked (GlcNAc...) asparagine). 195–197 (DDD) contributes to the UDP-alpha-D-glucuronate binding site. Aspartate 197 is a Mn(2+) binding site. The tract at residues 245-254 (FDPHRPFAID) is interaction with galactose moiety of substrate glycoprotein. Glutamate 284 functions as the Proton donor/acceptor in the catalytic mechanism. The N-linked (GlcNAc...) asparagine glycan is linked to asparagine 303. A UDP-alpha-D-glucuronate-binding site is contributed by 311–313 (HTR).

The protein belongs to the glycosyltransferase 43 family. In terms of assembly, homodimer. Interacts with SAR1A. Mn(2+) serves as cofactor. In terms of processing, the soluble form derives from the membrane form by proteolytic processing. In terms of tissue distribution, mainly expressed in the brain.

It is found in the golgi apparatus membrane. Its subcellular location is the secreted. The protein resides in the endoplasmic reticulum membrane. The enzyme catalyses 3-O-(beta-D-galactosyl-(1-&gt;3)-beta-D-galactosyl-(1-&gt;4)-beta-D-xylosyl)-L-seryl-[protein] + UDP-alpha-D-glucuronate = 3-O-(beta-D-GlcA-(1-&gt;3)-beta-D-Gal-(1-&gt;3)-beta-D-Gal-(1-&gt;4)-beta-D-Xyl)-L-seryl-[protein] + UDP + H(+). The protein operates within protein modification; protein glycosylation. Its function is as follows. Involved in the biosynthesis of L2/HNK-1 carbohydrate epitope on glycoproteins. Can also play a role in glycosaminoglycan biosynthesis. Substrates include asialo-orosomucoid (ASOR), asialo-fetuin, and asialo-neural cell adhesion molecule. Requires sphingomyelin for activity: stearoyl-sphingomyelin was the most effective, followed by palmitoyl-sphingomyelin and lignoceroyl-sphingomyelin. Activity was demonstrated only for sphingomyelin with a saturated fatty acid and not for that with an unsaturated fatty acid, regardless of the length of the acyl group. The sequence is that of Galactosylgalactosylxylosylprotein 3-beta-glucuronosyltransferase 1 from Homo sapiens (Human).